A 155-amino-acid chain; its full sequence is Regulatory protein RecX (155 aa).

This sequence belongs to the RecX family.

The protein resides in the cytoplasm. In terms of biological role, modulates RecA activity. The sequence is that of Regulatory protein RecX from Vibrio parahaemolyticus serotype O3:K6 (strain RIMD 2210633).